The sequence spans 319 residues: Methionyl-tRNA formyltransferase (319 aa).

Position 113 to 116 (113 to 116 (SLLP)) interacts with (6S)-5,6,7,8-tetrahydrofolate.

The protein belongs to the Fmt family.

The catalysed reaction is L-methionyl-tRNA(fMet) + (6R)-10-formyltetrahydrofolate = N-formyl-L-methionyl-tRNA(fMet) + (6S)-5,6,7,8-tetrahydrofolate + H(+). Attaches a formyl group to the free amino group of methionyl-tRNA(fMet). The formyl group appears to play a dual role in the initiator identity of N-formylmethionyl-tRNA by promoting its recognition by IF2 and preventing the misappropriation of this tRNA by the elongation apparatus. The polypeptide is Methionyl-tRNA formyltransferase (Hamiltonella defensa subsp. Acyrthosiphon pisum (strain 5AT)).